We begin with the raw amino-acid sequence, 400 residues long: Enoyl-[acyl-carrier-protein] reductase [NADH] (400 aa).

Residues 48–53 (GSSSGY), 74–75 (FE), 111–112 (DA), and 139–140 (LA) contribute to the NAD(+) site. A substrate-binding site is contributed by Tyr225. Tyr235 acts as the Proton donor in catalysis. NAD(+)-binding positions include Lys244 and 273-275 (VVT).

It belongs to the TER reductase family. In terms of assembly, monomer.

It carries out the reaction a 2,3-saturated acyl-[ACP] + NAD(+) = a (2E)-enoyl-[ACP] + NADH + H(+). It participates in lipid metabolism; fatty acid biosynthesis. Involved in the final reduction of the elongation cycle of fatty acid synthesis (FAS II). Catalyzes the reduction of a carbon-carbon double bond in an enoyl moiety that is covalently linked to an acyl carrier protein (ACP). This chain is Enoyl-[acyl-carrier-protein] reductase [NADH], found in Shewanella piezotolerans (strain WP3 / JCM 13877).